The primary structure comprises 362 residues: Oryzain gamma chain (362 aa).

Positions 1–24 (MAHRRIILLLAAAAVAATSAVAAA) are cleaved as a signal peptide. Residues 25–144 (SSGFDDSNPI…GNHRMRDAAA (120 aa)) constitute a propeptide, activation peptide. An N-linked (GlcNAc...) asparagine glycan is attached at N128. Intrachain disulfides connect C166–C209 and C200–C242. Residue C169 is part of the active site. N258 carries an N-linked (GlcNAc...) asparagine glycan. An intrachain disulfide couples C300 to C350. Active-site residues include H309 and N329.

The protein belongs to the peptidase C1 family. As to expression, expressed only in seeds.

The sequence is that of Oryzain gamma chain from Oryza sativa subsp. japonica (Rice).